Here is a 597-residue protein sequence, read N- to C-terminus: Phosphoinositide phospholipase C 4 (597 aa).

An EF-hand domain is found at 26-60 (GPVEDVRDLFEKYTEGDAHMSPEQLQKLMTEEGGE). Positions 114-257 (QNMDAPLSHY…LKEKILISTK (144 aa)) constitute a PI-PLC X-box domain. Residues His129 and His174 contribute to the active site. Basic and acidic residues predominate over residues 259-290 (PKEYLEANDTKEKDNGEKGKDSDEDVWGKEPE). A disordered region spans residues 259-324 (PKEYLEANDT…ERGSCESDTS (66 aa)). Polar residues predominate over residues 293-309 (ISTQSDLDKVTSSVNDL). A PI-PLC Y-box domain is found at 333–449 (KRLIAIHAGK…GYVKKPDFLM (117 aa)). The C2 domain maps to 449-579 (MDASPNGQDF…QGIRAVPLFN (131 aa)).

The cofactor is Ca(2+). In terms of tissue distribution, low expression in leaves, roots, flowers and siliques. Expressed in pollen and in cells of the stigma surface.

Its subcellular location is the cytoplasm. It is found in the cytosol. The protein localises to the cell membrane. The catalysed reaction is a 1,2-diacyl-sn-glycero-3-phospho-(1D-myo-inositol-4,5-bisphosphate) + H2O = 1D-myo-inositol 1,4,5-trisphosphate + a 1,2-diacyl-sn-glycerol + H(+). Functionally, the production of the second messenger molecules diacylglycerol (DAG) and inositol 1,4,5-trisphosphate (IP3) is mediated by activated phosphatidylinositol-specific phospholipase C enzymes. This is Phosphoinositide phospholipase C 4 (PLC4) from Arabidopsis thaliana (Mouse-ear cress).